We begin with the raw amino-acid sequence, 175 residues long: ATP-dependent protease subunit HslV (175 aa).

The active site involves Thr-2. Na(+)-binding residues include Gly-158, Cys-161, and Thr-164.

This sequence belongs to the peptidase T1B family. HslV subfamily. In terms of assembly, a double ring-shaped homohexamer of HslV is capped on each side by a ring-shaped HslU homohexamer. The assembly of the HslU/HslV complex is dependent on binding of ATP.

It is found in the cytoplasm. The enzyme catalyses ATP-dependent cleavage of peptide bonds with broad specificity.. Its activity is regulated as follows. Allosterically activated by HslU binding. Its function is as follows. Protease subunit of a proteasome-like degradation complex believed to be a general protein degrading machinery. This chain is ATP-dependent protease subunit HslV, found in Haemophilus influenzae (strain 86-028NP).